Reading from the N-terminus, the 116-residue chain is Venom nerve growth factor (116 aa).

Intrachain disulfides connect cysteine 14-cysteine 78, cysteine 56-cysteine 106, and cysteine 66-cysteine 108.

Belongs to the NGF-beta family. Homodimer; non-covalently linked. Post-translationally, not glycosylated. In terms of tissue distribution, expressed by the venom gland.

It is found in the secreted. Its function is as follows. Nerve growth factor is important for the development and maintenance of the sympathetic and sensory nervous systems. It stimulates division and differentiation of sympathetic and embryonic sensory neurons as well as basal forebrain cholinergic neurons in the brain. Its relevance in the snake venom is not clear. However, it has been shown to inhibit metalloproteinase-dependent proteolysis of platelet glycoprotein Ib alpha, suggesting a metalloproteinase inhibition to prevent metalloprotease autodigestion and/or protection against prey proteases. Binds a lipid between the two protein chains in the homodimer. The lipid-bound form promotes histamine relase from mouse mast cells, contrary to the lipid-free form. The chain is Venom nerve growth factor from Naja naja (Indian cobra).